The following is a 387-amino-acid chain: Large ribosomal subunit protein uL3 (387 aa).

The protein belongs to the universal ribosomal protein uL3 family.

The protein localises to the cytoplasm. The polypeptide is Large ribosomal subunit protein uL3 (RPL3) (Kluyveromyces lactis (strain ATCC 8585 / CBS 2359 / DSM 70799 / NBRC 1267 / NRRL Y-1140 / WM37) (Yeast)).